The chain runs to 320 residues: Cytochrome f (320 aa).

The signal sequence occupies residues 1 to 35 (MQTRNTFSWIREEITRSISVSLIIYIITRASISSA). 4 residues coordinate heme: Tyr-36, Cys-56, Cys-59, and His-60. A helical transmembrane segment spans residues 286–306 (VQGLLFFLASVVLAQIFLVLK).

The protein belongs to the cytochrome f family. The 4 large subunits of the cytochrome b6-f complex are cytochrome b6, subunit IV (17 kDa polypeptide, petD), cytochrome f and the Rieske protein, while the 4 small subunits are PetG, PetL, PetM and PetN. The complex functions as a dimer. It depends on heme as a cofactor.

The protein localises to the plastid. It localises to the chloroplast thylakoid membrane. Functionally, component of the cytochrome b6-f complex, which mediates electron transfer between photosystem II (PSII) and photosystem I (PSI), cyclic electron flow around PSI, and state transitions. This chain is Cytochrome f, found in Draba nemorosa (Woodland whitlowgrass).